The following is a 126-amino-acid chain: Bleomycin resistance protein (126 aa).

In terms of domain architecture, VOC spans Met1 to Asn119.

This sequence belongs to the bleomycin resistance protein family.

In terms of biological role, binding protein with a strong affinity to the bleomycin family of antibiotics. Binds to CL990; an antimitotic-antibiotic compound. This chain is Bleomycin resistance protein (ble), found in Klebsiella pneumoniae.